A 218-amino-acid chain; its full sequence is Oocyte-specific homeobox protein 7 (218 aa).

Residues 40-72 are compositionally biased toward polar residues; it reads SPLVTPGSTMQSSLSVPERNLLQQESEGPSRQS. The tract at residues 40 to 77 is disordered; sequence SPLVTPGSTMQSSLSVPERNLLQQESEGPSRQSGCMPL. Positions 94 to 153 form a DNA-binding region, homeobox; sequence FRKERIVYSKEQQRLLQKHFDECQYPKEKKIVELAVLIGVTKMEIKKWFKNNRAKYRQMN.

It belongs to the paired homeobox family. Obox subfamily. As to expression, specifically expressed in oocytes and early embryos.

It localises to the nucleus. Transcription factor required for zygotic genome activation (ZGA), a critical event in early embryonic development during which the developmental control passes from maternally provided mRNAs to the expression of the zygotic genome after fertilization. Together with other Obox family members, required in early two-cell stage embryos to kick-start the major ZGA wave by facilitating RNA Polymerase II 'pre-configuration', during which RNA Polymerase II relocates from the initial one-cell stage binding targets to ZGA gene promoters and distal enhancers. Mechanistically, promotes recruitment of RNA Polymerase II from (CG-rich) non-ZGA genes to (CG-poor) ZGA genes at the two-cell stage. Binds to regulatory DNA sequences containing a 5'-ACNCCTTTAATCCCAG-3' sequence motif. Most maternal and zygotic Obox family proteins can compensate for one another. The protein is Oocyte-specific homeobox protein 7 of Mus musculus (Mouse).